Consider the following 1383-residue polypeptide: Palladin (1383 aa).

3 disordered regions span residues 1-22 (MSGTSSHESFYDSLSDMQEESK), 52-169 (DSET…SQLC), and 183-238 (FKAA…KSPG). Positions 78–96 (HPSHKETKLGEHASRRPQD) are enriched in basic and acidic residues. Residues 191–201 (RSPNGESSSPD) show a composition bias toward polar residues. Ser192 is subject to Phosphoserine. A compositionally biased stretch (low complexity) spans 210–223 (QPSALLSASASQSP). The region spanning 271-360 (PRFIQKLRSQ…GSDTTSAEVF (90 aa)) is the Ig-like C2-type 1 domain. Cys292 and Cys344 are oxidised to a cystine. Position 401 is a phosphoserine (Ser401). Residues 440 to 539 (PPVFTKELQN…ATSTAQLVVT (100 aa)) enclose the Ig-like C2-type 2 domain. A disulfide bridge links Cys462 with Cys521. The interaction with VASP stretch occupies residues 562–566 (FPPPP). Disordered stretches follow at residues 609-653 (ETNG…LAKP), 673-728 (AGAR…SSGS), and 740-846 (AQNL…RFGH). Ser632 carries the phosphoserine modification. Phosphothreonine is present on Thr635. Position 641 is a phosphoserine (Ser641). The interaction with LASP1 stretch occupies residues 646–676 (PPPLLAKPKLDPLKLQQLQNQIRLEQEAGAR). The interaction with SORBS2, SPIN90 and SRC stretch occupies residues 676-696 (RQPPPAPRSAPPSPPFPPPPA). A compositionally biased stretch (pro residues) spans 677 to 697 (QPPPAPRSAPPSPPFPPPPAF). Ser684, Ser688, and Ser728 each carry phosphoserine. Positions 745–763 (PASGHGTPASSPSSSSLPS) are enriched in low complexity. The interaction with EPS8 stretch occupies residues 766-831 (SPTPRQFGRA…PPPPPPLPSP (66 aa)). Positions 796–831 (SPSPPPPPPPVFSPTAAFPVPDVFPLPPPPPPLPSP) are interaction with SORBS2, SPIN90, SRC and PFN1. Pro residues-rich tracts occupy residues 797-807 (PSPPPPPPPVF) and 817-830 (DVFPLPPPPPPLPS). An interaction with VASP region spans residues 819-823 (FPLPP). Over residues 832–846 (GQASHCSSPATRFGH) the composition is skewed to polar residues. An interaction with ACTN region spans residues 833–890 (QASHCSSPATRFGHSQTPAAFLSALLPSQPPPAAVNALGLPKGVTPAGFPKKASRTAR). 3 positions are modified to phosphoserine: Ser893, Ser979, and Ser984. Positions 1001 to 1085 (PFFEMKLKHY…MAANPQGRIS (85 aa)) constitute an Ig-like C2-type 3 domain. The interval 1096-1125 (NQRGRSPRSPSGHPHVRRPRSRSRDSGDEN) is disordered. Residues 1098-1108 (RGRSPRSPSGH) show a composition bias toward low complexity. Phosphoserine is present on residues Ser1101, Ser1104, Ser1106, and Ser1116. Position 1118 is a phosphoserine; by PKB/AKT1 (Ser1118). Ser1121 bears the Phosphoserine mark. 2 consecutive Ig-like C2-type domains span residues 1135-1226 (PHFL…LVVA) and 1233-1324 (PPVF…ARLD). Interaction with EZR stretches follow at residues 1137 to 1226 (FLQA…LVVA) and 1236 to 1326 (FIEK…LDVY). A disulfide bridge links Cys1156 with Cys1208. At Ser1352 the chain carries Phosphoserine.

This sequence belongs to the myotilin/palladin family. As to quaternary structure, interacts with EPS8. Interacts with LASP1. Interacts with VASP. Interacts with ACTN. Interacts with SORBS2. Interacts with PFN1. Interacts with LPP. Interacts with SPIN90. Interacts with SRC. Interacts with EZR. Interacts with RAI14. Post-translationally, phosphorylated predominantly on serines and, to a lesser extent, on tyrosines. Phosphorylation at Ser-1118 by PKB/AKT1 modulates cytoskeletal organization and cell motility. As to expression, detected in both muscle and non-muscle tissues. High expression in prostate, ovary, colon, and kidney. Not detected in spleen, skeletal muscle, lung and peripheral blood lymphocytes (at protein level). Protein is overexpressed in FA6, HPAF, IMIM-PC2, SUIT-2 and PancTu-II sporadic pancreatic cancer cell lines.

Its subcellular location is the cytoplasm. The protein resides in the cytoskeleton. The protein localises to the cell junction. It localises to the focal adhesion. It is found in the myofibril. Its subcellular location is the sarcomere. The protein resides in the z line. The protein localises to the cell projection. It localises to the ruffle. It is found in the podosome. Its subcellular location is the lamellipodium. The protein resides in the axon. The protein localises to the growth cone. Functionally, cytoskeletal protein required for organization of normal actin cytoskeleton. Roles in establishing cell morphology, motility, cell adhesion and cell-extracellular matrix interactions in a variety of cell types. May function as a scaffolding molecule with the potential to influence both actin polymerization and the assembly of existing actin filaments into higher-order arrays. Binds to proteins that bind to either monomeric or filamentous actin. Localizes at sites where active actin remodeling takes place, such as lamellipodia and membrane ruffles. Different isoforms may have functional differences. Involved in the control of morphological and cytoskeletal changes associated with dendritic cell maturation. Involved in targeting ACTN to specific subcellular foci. The polypeptide is Palladin (PALLD) (Homo sapiens (Human)).